The primary structure comprises 219 residues: Large ribosomal subunit protein uL16y (219 aa).

This sequence belongs to the universal ribosomal protein uL16 family. Component of the small ribosomal subunit. Mature ribosomes consist of a small (40S) and a large (60S) subunit. The 40S subunit contains about 33 different proteins and 1 molecule of RNA (18S). The 60S subunit contains about 49 different proteins and 3 molecules of RNA (25S, 5.8S and 5S).

In Oryza sativa subsp. japonica (Rice), this protein is Large ribosomal subunit protein uL16y (SG12).